The sequence spans 331 residues: ADP-L-glycero-D-manno-heptose-6-epimerase (331 aa).

NADP(+) is bound by residues 11-12 (FI), 32-33 (DN), Lys-39, Lys-54, 75-79 (LGACT), and Asn-92. Residue Tyr-139 is the Proton acceptor of the active site. An NADP(+)-binding site is contributed by Lys-143. Residue Asn-168 coordinates substrate. The NADP(+) site is built by Val-169 and Lys-177. Lys-177 functions as the Proton acceptor in the catalytic mechanism. Substrate contacts are provided by residues Arg-179, Gln-186, 200-203 (FGEH), His-213, and Tyr-292.

Belongs to the NAD(P)-dependent epimerase/dehydratase family. HldD subfamily. Homopentamer. NADP(+) serves as cofactor.

It catalyses the reaction ADP-D-glycero-beta-D-manno-heptose = ADP-L-glycero-beta-D-manno-heptose. The protein operates within nucleotide-sugar biosynthesis; ADP-L-glycero-beta-D-manno-heptose biosynthesis; ADP-L-glycero-beta-D-manno-heptose from D-glycero-beta-D-manno-heptose 7-phosphate: step 4/4. Its function is as follows. Catalyzes the interconversion between ADP-D-glycero-beta-D-manno-heptose and ADP-L-glycero-beta-D-manno-heptose via an epimerization at carbon 6 of the heptose. This Cupriavidus pinatubonensis (strain JMP 134 / LMG 1197) (Cupriavidus necator (strain JMP 134)) protein is ADP-L-glycero-D-manno-heptose-6-epimerase.